The primary structure comprises 255 residues: Cytosolic Fe-S cluster assembly factor Nubp2 homolog (255 aa).

14–21 (GKGGVGKS) provides a ligand contact to ATP. [4Fe-4S] cluster-binding residues include Cys-185 and Cys-188.

The protein belongs to the Mrp/NBP35 ATP-binding proteins family. NUBP2/CFD1 subfamily. Heterotetramer of 2 Nubp1 and 2 Nubp2 chains. It depends on [4Fe-4S] cluster as a cofactor.

Its subcellular location is the cytoplasm. Its function is as follows. Component of the cytosolic iron-sulfur (Fe/S) protein assembly (CIA) machinery. Required for maturation of extramitochondrial Fe-S proteins. The Nubp1-Nubp2 heterotetramer forms a Fe-S scaffold complex, mediating the de novo assembly of an Fe-S cluster and its transfer to target apoproteins. The protein is Cytosolic Fe-S cluster assembly factor Nubp2 homolog of Drosophila persimilis (Fruit fly).